A 93-amino-acid chain; its full sequence is uncharacterized protein (93 aa).

This is an uncharacterized protein from Acidianus sp. F28 (AFV-2).